We begin with the raw amino-acid sequence, 251 residues long: Ubiquinone/menaquinone biosynthesis C-methyltransferase UbiE (251 aa).

Residues Thr74, Asp95, and 123-124 contribute to the S-adenosyl-L-methionine site; that span reads NA.

This sequence belongs to the class I-like SAM-binding methyltransferase superfamily. MenG/UbiE family.

It catalyses the reaction a 2-demethylmenaquinol + S-adenosyl-L-methionine = a menaquinol + S-adenosyl-L-homocysteine + H(+). It carries out the reaction a 2-methoxy-6-(all-trans-polyprenyl)benzene-1,4-diol + S-adenosyl-L-methionine = a 5-methoxy-2-methyl-3-(all-trans-polyprenyl)benzene-1,4-diol + S-adenosyl-L-homocysteine + H(+). The protein operates within quinol/quinone metabolism; menaquinone biosynthesis; menaquinol from 1,4-dihydroxy-2-naphthoate: step 2/2. It participates in cofactor biosynthesis; ubiquinone biosynthesis. In terms of biological role, methyltransferase required for the conversion of demethylmenaquinol (DMKH2) to menaquinol (MKH2) and the conversion of 2-polyprenyl-6-methoxy-1,4-benzoquinol (DDMQH2) to 2-polyprenyl-3-methyl-6-methoxy-1,4-benzoquinol (DMQH2). This is Ubiquinone/menaquinone biosynthesis C-methyltransferase UbiE from Shewanella woodyi (strain ATCC 51908 / MS32).